We begin with the raw amino-acid sequence, 947 residues long: Bifunctional glutamine synthetase adenylyltransferase/adenylyl-removing enzyme (947 aa).

The interval M1 to E440 is adenylyl removase. Positions S450 to V947 are adenylyl transferase.

The protein belongs to the GlnE family. Mg(2+) serves as cofactor.

The enzyme catalyses [glutamine synthetase]-O(4)-(5'-adenylyl)-L-tyrosine + phosphate = [glutamine synthetase]-L-tyrosine + ADP. The catalysed reaction is [glutamine synthetase]-L-tyrosine + ATP = [glutamine synthetase]-O(4)-(5'-adenylyl)-L-tyrosine + diphosphate. Its function is as follows. Involved in the regulation of glutamine synthetase GlnA, a key enzyme in the process to assimilate ammonia. When cellular nitrogen levels are high, the C-terminal adenylyl transferase (AT) inactivates GlnA by covalent transfer of an adenylyl group from ATP to specific tyrosine residue of GlnA, thus reducing its activity. Conversely, when nitrogen levels are low, the N-terminal adenylyl removase (AR) activates GlnA by removing the adenylyl group by phosphorolysis, increasing its activity. The regulatory region of GlnE binds the signal transduction protein PII (GlnB) which indicates the nitrogen status of the cell. In Salmonella enteritidis PT4 (strain P125109), this protein is Bifunctional glutamine synthetase adenylyltransferase/adenylyl-removing enzyme.